The following is a 263-amino-acid chain: Endonuclease 8 (263 aa).

The active-site Schiff-base intermediate with DNA is Pro-2. The active-site Proton donor is the Glu-3. Catalysis depends on Lys-53, which acts as the Proton donor; for beta-elimination activity. Gln-70, Arg-125, and Asn-169 together coordinate DNA. An FPG-type zinc finger spans residues 229 to 263 (KVFHRDGEACERCGGIIEKTTLSSRPFYWCPHCQK). Arg-253 serves as the catalytic Proton donor; for delta-elimination activity.

The protein belongs to the FPG family. It depends on Zn(2+) as a cofactor.

It carries out the reaction 2'-deoxyribonucleotide-(2'-deoxyribose 5'-phosphate)-2'-deoxyribonucleotide-DNA = a 3'-end 2'-deoxyribonucleotide-(2,3-dehydro-2,3-deoxyribose 5'-phosphate)-DNA + a 5'-end 5'-phospho-2'-deoxyribonucleoside-DNA + H(+). Its function is as follows. Involved in base excision repair of DNA damaged by oxidation or by mutagenic agents. Acts as a DNA glycosylase that recognizes and removes damaged bases. Has a preference for oxidized pyrimidines, such as thymine glycol, 5,6-dihydrouracil and 5,6-dihydrothymine. Has AP (apurinic/apyrimidinic) lyase activity and introduces nicks in the DNA strand. Cleaves the DNA backbone by beta-delta elimination to generate a single-strand break at the site of the removed base with both 3'- and 5'-phosphates. The polypeptide is Endonuclease 8 (Salmonella paratyphi B (strain ATCC BAA-1250 / SPB7)).